The sequence spans 146 residues: Large ribosomal subunit protein uL13 (146 aa).

Positions Tyr-125 to Gly-146 are disordered.

The protein belongs to the universal ribosomal protein uL13 family. Part of the 50S ribosomal subunit.

This protein is one of the early assembly proteins of the 50S ribosomal subunit, although it is not seen to bind rRNA by itself. It is important during the early stages of 50S assembly. This chain is Large ribosomal subunit protein uL13, found in Roseiflexus sp. (strain RS-1).